Reading from the N-terminus, the 268-residue chain is Cytochrome b-c1 complex subunit Rieske-5, mitochondrial (268 aa).

The transit peptide at 1-56 directs the protein to the mitochondrion; sequence MLRIAGRKLSSSAAARSSSAFFTRNPFTFTDDSSSPTRSPSPTSLASQFLDQFRGF. At 57 to 105 the chain is on the mitochondrial matrix side; it reads SSNSVSPAHQTGLVSDLPATVAAIKNPSSKIVYDDSNHERYPPGDPSKR. A helical membrane pass occupies residues 106–128; the sequence is AFAYFVLTGGRFVYASLVRLLIL. The Mitochondrial intermembrane segment spans residues 129 to 268; sequence KFVLSMSASK…FMEENKLLIG (140 aa). Residues 178-266 form the Rieske domain; it reads INLANSVDLG…YSFMEENKLL (89 aa). The [2Fe-2S] cluster site is built by cysteine 211, histidine 213, cysteine 230, and histidine 233. A disulfide bridge links cysteine 216 with cysteine 232.

Belongs to the Rieske iron-sulfur protein family. Component of the ubiquinol-cytochrome c oxidoreductase (cytochrome b-c1 complex, complex III, CIII), a multisubunit enzyme composed of 3 respiratory subunits cytochrome b, cytochrome c1 and Rieske protein, 2 core protein subunits, and several low-molecular weight protein subunits. The complex exists as an obligatory dimer and forms supercomplexes (SCs) in the inner mitochondrial membrane with cytochrome c oxidase (complex IV, CIV). [2Fe-2S] cluster is required as a cofactor. As to expression, high levels are seen in the flowers while a low level expression is seen in the roots, leaves and stems.

It localises to the mitochondrion inner membrane. It catalyses the reaction a quinol + 2 Fe(III)-[cytochrome c](out) = a quinone + 2 Fe(II)-[cytochrome c](out) + 2 H(+)(out). In terms of biological role, component of the ubiquinol-cytochrome c oxidoreductase, a multisubunit transmembrane complex that is part of the mitochondrial electron transport chain which drives oxidative phosphorylation. The respiratory chain contains 3 multisubunit complexes succinate dehydrogenase (complex II, CII), ubiquinol-cytochrome c oxidoreductase (cytochrome b-c1 complex, complex III, CIII) and cytochrome c oxidase (complex IV, CIV), that cooperate to transfer electrons derived from NADH and succinate to molecular oxygen, creating an electrochemical gradient over the inner membrane that drives transmembrane transport and the ATP synthase. The cytochrome b-c1 complex catalyzes electron transfer from ubiquinol to cytochrome c, linking this redox reaction to translocation of protons across the mitochondrial inner membrane, with protons being carried across the membrane as hydrogens on the quinol. In the process called Q cycle, 2 protons are consumed from the matrix, 4 protons are released into the intermembrane space and 2 electrons are passed to cytochrome c. The Rieske protein is a catalytic core subunit containing a [2Fe-2S] iron-sulfur cluster. It cycles between 2 conformational states during catalysis to transfer electrons from the quinol bound in the Q(0) site in cytochrome b to cytochrome c1. This Nicotiana tabacum (Common tobacco) protein is Cytochrome b-c1 complex subunit Rieske-5, mitochondrial.